The following is a 503-amino-acid chain: MDLSPRNRPLLDSSSLDSGSLTSLDSSVFCSEGEGEPLALGDCLTVNVGGSRFVLSQQALSCFPHTRLGKLAVVVASYRRLGALAAAPSPLELCDDANPVDNEYFFDRSSQAFRYVLHYYRTGRLHVMEQLCALSFLQEIQYWGIDELSIDSCCRDRYFRRKELSETLDFKKDTDDQESQHESEQDFSQGPCPTVRQKLWDILEKPGSSTAARIFGVISIIFVAVSIVNMALMSAELSWLNLQLLEILEYVCISWFTGEFILRFLCVKDRCHFLRKVPNIIDLLAILPFYITLLVESLSGSHTTQELENVGRLVQVLRLLRALRMLKLGRHSTGLRSLGMTITQCYEEVGLLLLFLSVGISIFSTIEYFAEQSIPDTTFTSVPCAWWWATTSMTTVGYGDIRPDTTTGKIVAFMCILSGILVLALPIAIINDRFSACYFTLKLKEAAVRQREALKKLTKNIATDSYISVNLRDIYARSIMEMLRLKGRERASTRSSGGDDFWF.

Disordered stretches follow at residues 1–20 (MDLS…DSGS) and 171–192 (KKDT…QGPC). Residues 3-213 (LSPRNRPLLD…EKPGSSTAAR (211 aa)) lie on the Cytoplasmic side of the membrane. Residues 10–20 (LLDSSSLDSGS) show a composition bias toward low complexity. The segment covering 171-184 (KKDTDDQESQHESE) has biased composition (basic and acidic residues). Residues 214–234 (IFGVISIIFVAVSIVNMALMS) form a helical membrane-spanning segment. The Extracellular portion of the chain corresponds to 235–241 (AELSWLN). Residues 242–262 (LQLLEILEYVCISWFTGEFIL) form a helical membrane-spanning segment. The Cytoplasmic portion of the chain corresponds to 263–279 (RFLCVKDRCHFLRKVPN). Residues 280–300 (IIDLLAILPFYITLLVESLSG) form a helical membrane-spanning segment. The Extracellular segment spans residues 301 to 312 (SHTTQELENVGR). A helical; Voltage-sensor membrane pass occupies residues 313-334 (LVQVLRLLRALRMLKLGRHSTG). Residues 335–348 (LRSLGMTITQCYEE) are Cytoplasmic-facing. A helical transmembrane segment spans residues 349–369 (VGLLLLFLSVGISIFSTIEYF). A Selectivity filter motif is present at residues 395–400 (TVGYGD). A helical membrane pass occupies residues 410–430 (IVAFMCILSGILVLALPIAII). The Cytoplasmic segment spans residues 431 to 503 (NDRFSACYFT…RSSGGDDFWF (73 aa)).

This sequence belongs to the potassium channel family. V (TC 1.A.1.2) subfamily. Kv8.1/KCNV1 sub-subfamily. Heteromultimer with KCNB1 and KCNB2. Interacts with KCNC4 and KCND1. Detected in brain, in neocortex, olfactory tubercle, hippocampus, dentate gyrus, piriform cortex and amygdala. Detected in Purkinje cells and granular cells of the cerebellum, in hippocampal CA4 neurons and neocortex pyramidal cells.

It localises to the cell membrane. Functionally, potassium channel subunit that does not form functional channels by itself. Modulates KCNB1 and KCNB2 channel activity by shifting the threshold for inactivation to more negative values and by slowing the rate of inactivation. Can down-regulate the channel activity of KCNB1, KCNB2, KCNC4 and KCND1, possibly by trapping them in intracellular membranes. This Rattus norvegicus (Rat) protein is Potassium voltage-gated channel subfamily V member 1 (Kcnv1).